We begin with the raw amino-acid sequence, 185 residues long: Elongation factor P (185 aa).

This sequence belongs to the elongation factor P family.

The protein resides in the cytoplasm. Its pathway is protein biosynthesis; polypeptide chain elongation. Involved in peptide bond synthesis. Stimulates efficient translation and peptide-bond synthesis on native or reconstituted 70S ribosomes in vitro. Probably functions indirectly by altering the affinity of the ribosome for aminoacyl-tRNA, thus increasing their reactivity as acceptors for peptidyl transferase. The sequence is that of Elongation factor P from Staphylococcus aureus (strain Mu3 / ATCC 700698).